The chain runs to 138 residues: Putative nickel-responsive regulator (138 aa).

Residues His-78, His-89, His-91, and Cys-97 each contribute to the Ni(2+) site.

This sequence belongs to the transcriptional regulatory CopG/NikR family. Ni(2+) is required as a cofactor.

In terms of biological role, transcriptional regulator. The protein is Putative nickel-responsive regulator of Thermococcus onnurineus (strain NA1).